A 167-amino-acid chain; its full sequence is uncharacterized protein (167 aa).

This is an uncharacterized protein from Aquifex aeolicus (strain VF5).